Here is a 348-residue protein sequence, read N- to C-terminus: Erlin-1 (348 aa).

The Cytoplasmic portion of the chain corresponds to 1-7 (MNMTQAR). A helical transmembrane segment spans residues 8–28 (VLVAAVVGLVAVLLYASIHKI). At 29–348 (EEGHLAVYYR…NLIQNKESTG (320 aa)) the chain is on the lumenal side. Asparagine 108 carries an N-linked (GlcNAc...) asparagine glycan. Lysine 269 bears the N6-acetyllysine mark. The span at 321–333 (TGRESSHPSKEAL) shows a compositional bias: basic and acidic residues. The segment at 321 to 348 (TGRESSHPSKEALEPSGENLIQNKESTG) is disordered. The span at 339-348 (NLIQNKESTG) shows a compositional bias: polar residues.

This sequence belongs to the band 7/mec-2 family. Forms a heteromeric complex with ERLIN2. In complex with ERLIN2, interacts with RNF170. Interacts with AMFR and SYVN1. Deubiquitinated by USP25; leading to stabilization.

It is found in the endoplasmic reticulum membrane. Its function is as follows. Component of the ERLIN1/ERLIN2 complex which mediates the endoplasmic reticulum-associated degradation (ERAD) of inositol 1,4,5-trisphosphate receptors (IP3Rs). Involved in regulation of cellular cholesterol homeostasis by regulation the SREBP signaling pathway. Binds cholesterol and may promote ER retention of the SCAP-SREBF complex. The polypeptide is Erlin-1 (Pongo abelii (Sumatran orangutan)).